Consider the following 228-residue polypeptide: Uracil-DNA glycosylase (228 aa).

The active-site Proton acceptor is Asp-64.

It belongs to the uracil-DNA glycosylase (UDG) superfamily. UNG family.

The protein resides in the cytoplasm. The enzyme catalyses Hydrolyzes single-stranded DNA or mismatched double-stranded DNA and polynucleotides, releasing free uracil.. Excises uracil residues from the DNA which can arise as a result of misincorporation of dUMP residues by DNA polymerase or due to deamination of cytosine. The protein is Uracil-DNA glycosylase of Yersinia enterocolitica serotype O:8 / biotype 1B (strain NCTC 13174 / 8081).